The following is a 329-amino-acid chain: DNA-directed RNA polymerase subunit alpha (329 aa).

The interval 1–235 is alpha N-terminal domain (alpha-NTD); sequence MQGSVTEFLK…EQLDAFVDLR (235 aa). The interval 249-329 is alpha C-terminal domain (alpha-CTD); it reads FDPILLRPVD…NWPPASIAED (81 aa).

The protein belongs to the RNA polymerase alpha chain family. As to quaternary structure, homodimer. The RNAP catalytic core consists of 2 alpha, 1 beta, 1 beta' and 1 omega subunit. When a sigma factor is associated with the core the holoenzyme is formed, which can initiate transcription.

The catalysed reaction is RNA(n) + a ribonucleoside 5'-triphosphate = RNA(n+1) + diphosphate. DNA-dependent RNA polymerase catalyzes the transcription of DNA into RNA using the four ribonucleoside triphosphates as substrates. In Actinobacillus pleuropneumoniae serotype 5b (strain L20), this protein is DNA-directed RNA polymerase subunit alpha.